The primary structure comprises 353 residues: Methylthioribose-1-phosphate isomerase (353 aa).

Substrate-binding positions include 51-53 (RGA), R94, and Q199. The Proton donor role is filled by D240. 250 to 251 (NK) contributes to the substrate binding site.

Belongs to the eIF-2B alpha/beta/delta subunits family. MtnA subfamily. In terms of assembly, homodimer.

It catalyses the reaction 5-(methylsulfanyl)-alpha-D-ribose 1-phosphate = 5-(methylsulfanyl)-D-ribulose 1-phosphate. Its pathway is amino-acid biosynthesis; L-methionine biosynthesis via salvage pathway; L-methionine from S-methyl-5-thio-alpha-D-ribose 1-phosphate: step 1/6. In terms of biological role, catalyzes the interconversion of methylthioribose-1-phosphate (MTR-1-P) into methylthioribulose-1-phosphate (MTRu-1-P). In Bacillus velezensis (strain DSM 23117 / BGSC 10A6 / LMG 26770 / FZB42) (Bacillus amyloliquefaciens subsp. plantarum), this protein is Methylthioribose-1-phosphate isomerase.